Reading from the N-terminus, the 338-residue chain is Envelope glycoprotein K (338 aa).

The signal sequence occupies residues methionine 1–glycine 30. Residues alanine 31 to threonine 121 are Extracellular-facing. Positions alanine 31–threonine 121 are involved in fusion. N-linked (GlcNAc...) asparagine; by host glycans are attached at residues asparagine 48 and asparagine 58. The chain crosses the membrane as a helical span at residues glutamine 122–histidine 140. The Cytoplasmic segment spans residues glutamine 141–proline 212. Residues alanine 213–valine 233 form a helical membrane-spanning segment. The Extracellular portion of the chain corresponds to glycine 234–cysteine 243. The helical transmembrane segment at alanine 244–leucine 264 threads the bilayer. Topologically, residues threonine 265–serine 301 are cytoplasmic. The interval threonine 265–serine 301 is interaction with UL20. The chain crosses the membrane as a helical span at residues isoleucine 302–leucine 322. The Extracellular portion of the chain corresponds to valine 323–leucine 338.

This sequence belongs to the alphaherpesvirinae glycoprotein K family. As to quaternary structure, interacts (via UL20 interaction region) with protein UL20 (via N-terminus); this interaction probably plays a role in the coordinate transport of protein UL20 and gK to the trans-Golgi network (TGN), and is required for the cell surface expression of gK. N-glycosylated.

The protein resides in the host cell membrane. The protein localises to the host endosome membrane. Its subcellular location is the host Golgi apparatus membrane. Its function is as follows. Glycoprotein that probably modulates membrane fusion events during secondary envelopment of cytoplasmic capsids that bud into specific trans-Golgi network (TGN)-derived membranes. Also plays a role, together with gB, in virus-induced cell-to-cell fusion (syncytia formation). Seems to block fusion of virions with infected-cell membranes. This Human herpesvirus 2 (strain HG52) (HHV-2) protein is Envelope glycoprotein K (gK).